The following is a 310-amino-acid chain: Ribosomal RNA small subunit methyltransferase H (310 aa).

Residues 32 to 34 (GGH), D52, F79, D100, and Q107 each bind S-adenosyl-L-methionine.

Belongs to the methyltransferase superfamily. RsmH family.

The protein resides in the cytoplasm. The enzyme catalyses cytidine(1402) in 16S rRNA + S-adenosyl-L-methionine = N(4)-methylcytidine(1402) in 16S rRNA + S-adenosyl-L-homocysteine + H(+). Specifically methylates the N4 position of cytidine in position 1402 (C1402) of 16S rRNA. This Bacillus cereus (strain B4264) protein is Ribosomal RNA small subunit methyltransferase H.